An 88-amino-acid chain; its full sequence is Small ribosomal subunit protein bS18B (88 aa).

The protein belongs to the bacterial ribosomal protein bS18 family. As to quaternary structure, part of the 30S ribosomal subunit. Forms a tight heterodimer with protein bS6.

Functionally, binds as a heterodimer with protein bS6 to the central domain of the 16S rRNA, where it helps stabilize the platform of the 30S subunit. The sequence is that of Small ribosomal subunit protein bS18B (rpsR2) from Mycobacterium bovis (strain ATCC BAA-935 / AF2122/97).